The primary structure comprises 78 residues: Large ribosomal subunit protein bL28 (78 aa).

The disordered stretch occupies residues 1–25 (MSRVCQVTGKRPAVGNNRSHAKNAT).

The protein belongs to the bacterial ribosomal protein bL28 family.

The chain is Large ribosomal subunit protein bL28 from Vibrio cholerae serotype O1 (strain ATCC 39541 / Classical Ogawa 395 / O395).